A 262-amino-acid polypeptide reads, in one-letter code: Undecaprenyl-diphosphatase (262 aa).

The next 8 membrane-spanning stretches (helical) occupy residues 15 to 35, 38 to 58, 91 to 111, 114 to 134, 149 to 169, 189 to 209, 219 to 239, and 242 to 262; these read LTEW…IILL, SSAA…IVAF, LYIL…AKYV, IFGS…LLYS, ALIV…RSGA, FLLS…VSPA, VGLL…LSII, and GRLH…LSLL.

It belongs to the UppP family.

The protein resides in the cell membrane. It catalyses the reaction di-trans,octa-cis-undecaprenyl diphosphate + H2O = di-trans,octa-cis-undecaprenyl phosphate + phosphate + H(+). Catalyzes the dephosphorylation of undecaprenyl diphosphate (UPP). In Korarchaeum cryptofilum (strain OPF8), this protein is Undecaprenyl-diphosphatase.